The sequence spans 346 residues: tRNA N6-adenosine threonylcarbamoyltransferase (346 aa).

Positions 111 and 115 each coordinate Fe cation. Residues 134 to 138 (LVSGG), Asp167, Gly180, and Asn279 contribute to the substrate site. Asp307 contributes to the Fe cation binding site.

It belongs to the KAE1 / TsaD family. It depends on Fe(2+) as a cofactor.

The protein resides in the cytoplasm. It catalyses the reaction L-threonylcarbamoyladenylate + adenosine(37) in tRNA = N(6)-L-threonylcarbamoyladenosine(37) in tRNA + AMP + H(+). In terms of biological role, required for the formation of a threonylcarbamoyl group on adenosine at position 37 (t(6)A37) in tRNAs that read codons beginning with adenine. Is involved in the transfer of the threonylcarbamoyl moiety of threonylcarbamoyl-AMP (TC-AMP) to the N6 group of A37, together with TsaE and TsaB. TsaD likely plays a direct catalytic role in this reaction. The protein is tRNA N6-adenosine threonylcarbamoyltransferase of Burkholderia multivorans (strain ATCC 17616 / 249).